Here is a 366-residue protein sequence, read N- to C-terminus: Aminomethyltransferase (366 aa).

This sequence belongs to the GcvT family. In terms of assembly, the glycine cleavage system is composed of four proteins: P, T, L and H.

It carries out the reaction N(6)-[(R)-S(8)-aminomethyldihydrolipoyl]-L-lysyl-[protein] + (6S)-5,6,7,8-tetrahydrofolate = N(6)-[(R)-dihydrolipoyl]-L-lysyl-[protein] + (6R)-5,10-methylene-5,6,7,8-tetrahydrofolate + NH4(+). Functionally, the glycine cleavage system catalyzes the degradation of glycine. In Moorella thermoacetica (strain ATCC 39073 / JCM 9320), this protein is Aminomethyltransferase.